The following is a 336-amino-acid chain: MDAWTYQFGNLSKISPFEGPQYHLAPKWAFYLQAAFMGFVFFVGTPLNAIVLFVTMKYKKLRQPLNYILVNISLGGFIFDTFSVSQVFFSALRGYYFFGYTLCAMEAAMGSIAGLVTGWSLAVLAFERYVVICKPFGSFKFGQSQALGAVALTWIIGIGCATPPFWGWSRYIPEGIGTACGPDWYTKNEEYNTESYTYFLLVSCFMMPIMIITFSYSQLLGALRAVAAQQAESASTQKAEKEVSRMVVVMVGSFVVCYGPYAITALYFSYAEDSNKDYRLVAIPSLFSKSSCVYNPLIYAFMNKQFNACIMETVFGKKIDESSEVSSKTETSSVSA.

Topologically, residues 1–29 (MDAWTYQFGNLSKISPFEGPQYHLAPKWA) are extracellular. The N-linked (GlcNAc...) asparagine glycan is linked to Asn-10. Residues 30-54 (FYLQAAFMGFVFFVGTPLNAIVLFV) form a helical membrane-spanning segment. Topologically, residues 55–66 (TMKYKKLRQPLN) are cytoplasmic. A helical transmembrane segment spans residues 67–91 (YILVNISLGGFIFDTFSVSQVFFSA). The Extracellular portion of the chain corresponds to 92–106 (LRGYYFFGYTLCAME). Cysteines 103 and 180 form a disulfide. The helical transmembrane segment at 107–126 (AAMGSIAGLVTGWSLAVLAF) threads the bilayer. Residues 127–145 (ERYVVICKPFGSFKFGQSQ) are Cytoplasmic-facing. The chain crosses the membrane as a helical span at residues 146–169 (ALGAVALTWIIGIGCATPPFWGWS). Over 170-195 (RYIPEGIGTACGPDWYTKNEEYNTES) the chain is Extracellular. Residues 196 to 223 (YTYFLLVSCFMMPIMIITFSYSQLLGAL) form a helical membrane-spanning segment. Topologically, residues 224–245 (RAVAAQQAESASTQKAEKEVSR) are cytoplasmic. The helical transmembrane segment at 246–269 (MVVVMVGSFVVCYGPYAITALYFS) threads the bilayer. At 270 to 277 (YAEDSNKD) the chain is on the extracellular side. A helical transmembrane segment spans residues 278–302 (YRLVAIPSLFSKSSCVYNPLIYAFM). Lys-289 carries the post-translational modification N6-(retinylidene)lysine. At 303-336 (NKQFNACIMETVFGKKIDESSEVSSKTETSSVSA) the chain is on the cytoplasmic side.

This sequence belongs to the G-protein coupled receptor 1 family. Opsin subfamily. Post-translationally, phosphorylated on some or all of the serine and threonine residues present in the C-terminal region.

It is found in the membrane. Visual pigments are the light-absorbing molecules that mediate vision. They consist of an apoprotein, opsin, covalently linked to cis-retinal. In Carassius auratus (Goldfish), this protein is Ultraviolet-sensitive opsin.